The chain runs to 179 residues: Large ribosomal subunit protein uL5 (179 aa).

Belongs to the universal ribosomal protein uL5 family. In terms of assembly, part of the 50S ribosomal subunit; part of the 5S rRNA/L5/L18/L25 subcomplex. Contacts the 5S rRNA and the P site tRNA. Forms a bridge to the 30S subunit in the 70S ribosome.

In terms of biological role, this is one of the proteins that bind and probably mediate the attachment of the 5S RNA into the large ribosomal subunit, where it forms part of the central protuberance. In the 70S ribosome it contacts protein S13 of the 30S subunit (bridge B1b), connecting the 2 subunits; this bridge is implicated in subunit movement. Contacts the P site tRNA; the 5S rRNA and some of its associated proteins might help stabilize positioning of ribosome-bound tRNAs. The sequence is that of Large ribosomal subunit protein uL5 from Synechococcus sp. (strain CC9311).